The chain runs to 174 residues: Pituitary tumor-transforming gene 1 protein-interacting protein (174 aa).

The signal sequence occupies residues 1–29 (MASAVLGLTLRWVMFLSAVLLLLLPGASA). At 30-93 (QEPPGVGCSE…RWGVCWVNFE (64 aa)) the chain is on the extracellular side. The PSI domain maps to 36-89 (GCSEYTNRSCEECLRNVSCLWCNENKACLDYPVRKILPPASLCKLSSARWGVCW). N-linked (GlcNAc...) asparagine glycosylation is found at N42 and N51. The chain crosses the membrane as a helical span at residues 94–114 (ALIITMSVLGGSVLLGITVCC). The Cytoplasmic segment spans residues 115–174 (CCCCRRKRSRKPDKSDERAMREQEERRVRQEERRAEMKSRHDEIRKKYGLFKEQNPYEKF). The tract at residues 126 to 155 (PDKSDERAMREQEERRVRQEERRAEMKSRH) is disordered. The stretch at 127–163 (DKSDERAMREQEERRVRQEERRAEMKSRHDEIRKKYG) forms a coiled coil. Y171 is modified (phosphotyrosine).

As to quaternary structure, interacts with PTTG1.

Its subcellular location is the cell membrane. The protein resides in the cytoplasm. It localises to the nucleus. Functionally, may facilitate PTTG1 nuclear translocation. The sequence is that of Pituitary tumor-transforming gene 1 protein-interacting protein (Pttg1ip) from Rattus norvegicus (Rat).